Here is a 20-residue protein sequence, read N- to C-terminus: Magnificalysin I (20 aa).

The interval 1–10 (ALAGTIIAGA) is plays an important role in the hemolytic activity. An N-terminal region region spans residues 9 to 20 (GASLTFKILDEV).

The protein belongs to the actinoporin family. Sea anemone subfamily. Octamer or nonamer in membranes. Monomer in the soluble state.

Its subcellular location is the secreted. It localises to the nematocyst. It is found in the target cell membrane. Pore-forming protein that forms cations-selective hydrophilic pores of around 1 nm and causes cytolysis. Pore formation is a multi-step process that involves specific recognition of membrane sphingomyelin (but neither cholesterol nor phosphatidylcholine) using aromatic rich region and adjacent phosphocholine (POC) binding site, firm binding to the membrane (mainly driven by hydrophobic interactions) accompanied by the transfer of the N-terminal region to the lipid-water interface and finally pore formation after oligomerization of monomers. The sequence is that of Magnificalysin I from Heteractis magnifica (Magnificent sea anemone).